The chain runs to 450 residues: Glucose-6-phosphate isomerase (450 aa).

Glutamate 290 acts as the Proton donor in catalysis. Residues histidine 311 and lysine 425 contribute to the active site.

It belongs to the GPI family.

It localises to the cytoplasm. It catalyses the reaction alpha-D-glucose 6-phosphate = beta-D-fructose 6-phosphate. It participates in carbohydrate biosynthesis; gluconeogenesis. It functions in the pathway carbohydrate degradation; glycolysis; D-glyceraldehyde 3-phosphate and glycerone phosphate from D-glucose: step 2/4. Its function is as follows. Catalyzes the reversible isomerization of glucose-6-phosphate to fructose-6-phosphate. The sequence is that of Glucose-6-phosphate isomerase from Alkaliphilus metalliredigens (strain QYMF).